The sequence spans 587 residues: Xyloglucan-specific endo-beta-1,4-glucanase BoGH9A (587 aa).

An N-terminal signal peptide occupies residues M1 to A19. A lipid anchor (N-palmitoyl cysteine) is attached at C20. C20 carries S-diacylglycerol cysteine lipidation. The Nucleophile role is filled by D185. Residues H511 and D553 contribute to the active site. The active-site Proton donor is the E562.

The protein belongs to the glycosyl hydrolase 9 (cellulase E) family.

It localises to the cell outer membrane. The catalysed reaction is xyloglucan + H2O = xyloglucan oligosaccharides.. It functions in the pathway glucan metabolism; xyloglucan degradation. Functionally, catalyzes endohydrolysis of 1,4-beta-D-glucosidic linkages in xyloglucan with retention of the beta-configuration of the glycosyl residues in xyloglucan degradation. Cleaves the backbone of the 3 major types of natural xyloglucans (seed galactoxyloglucan from tamarind kernel, dicot fucogalactoxyloglucan from lettuce leaves, and solanaceous arabinogalactoxyloglucan from tomato fruit), to produce xyloglucan oligosaccharides. May be superfluous in xyloglucan degradation compared to BoGH5A (AC A7LXT7), the other Xyloglucan-specific endo-beta-1,4-glucanase. This is Xyloglucan-specific endo-beta-1,4-glucanase BoGH9A from Bacteroides ovatus (strain ATCC 8483 / DSM 1896 / JCM 5824 / BCRC 10623 / CCUG 4943 / NCTC 11153).